Consider the following 193-residue polypeptide: Holliday junction branch migration complex subunit RuvA (193 aa).

The domain I stretch occupies residues 1–64; the sequence is MIGRIAGVLL…EDAHLLYGFL (64 aa). The interval 65–139 is domain II; that stretch reads TPQERSTFRE…GKLGADLGAM (75 aa). Residues 139-143 are flexible linker; the sequence is MAGAA. Residues 144 to 193 are domain III; the sequence is SQSDHASDILNALLALGYSEKEGLAAIKNVPAGTGVSEGIKLALKALSKA.

It belongs to the RuvA family. As to quaternary structure, homotetramer. Forms an RuvA(8)-RuvB(12)-Holliday junction (HJ) complex. HJ DNA is sandwiched between 2 RuvA tetramers; dsDNA enters through RuvA and exits via RuvB. An RuvB hexamer assembles on each DNA strand where it exits the tetramer. Each RuvB hexamer is contacted by two RuvA subunits (via domain III) on 2 adjacent RuvB subunits; this complex drives branch migration. In the full resolvosome a probable DNA-RuvA(4)-RuvB(12)-RuvC(2) complex forms which resolves the HJ.

The protein localises to the cytoplasm. The RuvA-RuvB-RuvC complex processes Holliday junction (HJ) DNA during genetic recombination and DNA repair, while the RuvA-RuvB complex plays an important role in the rescue of blocked DNA replication forks via replication fork reversal (RFR). RuvA specifically binds to HJ cruciform DNA, conferring on it an open structure. The RuvB hexamer acts as an ATP-dependent pump, pulling dsDNA into and through the RuvAB complex. HJ branch migration allows RuvC to scan DNA until it finds its consensus sequence, where it cleaves and resolves the cruciform DNA. In Paraburkholderia phymatum (strain DSM 17167 / CIP 108236 / LMG 21445 / STM815) (Burkholderia phymatum), this protein is Holliday junction branch migration complex subunit RuvA.